The following is a 365-amino-acid chain: Phospho-N-acetylmuramoyl-pentapeptide-transferase (365 aa).

The next 10 membrane-spanning stretches (helical) occupy residues 22-42 (YISV…LALG), 74-94 (TMGG…WGDL), 95-115 (TSIY…IGFF), 134-154 (KFAL…YLLS), 168-188 (SLYI…IING), 201-221 (GLAI…AYIE), 240-260 (LAEV…FLWF), 267-287 (VFMG…IAVM), 292-312 (LIFF…MLQV), and 342-362 (KVVI…LAAI).

This sequence belongs to the glycosyltransferase 4 family. MraY subfamily. Requires Mg(2+) as cofactor.

The protein localises to the cell inner membrane. The catalysed reaction is UDP-N-acetyl-alpha-D-muramoyl-L-alanyl-gamma-D-glutamyl-meso-2,6-diaminopimeloyl-D-alanyl-D-alanine + di-trans,octa-cis-undecaprenyl phosphate = di-trans,octa-cis-undecaprenyl diphospho-N-acetyl-alpha-D-muramoyl-L-alanyl-D-glutamyl-meso-2,6-diaminopimeloyl-D-alanyl-D-alanine + UMP. Its pathway is cell wall biogenesis; peptidoglycan biosynthesis. Functionally, catalyzes the initial step of the lipid cycle reactions in the biosynthesis of the cell wall peptidoglycan: transfers peptidoglycan precursor phospho-MurNAc-pentapeptide from UDP-MurNAc-pentapeptide onto the lipid carrier undecaprenyl phosphate, yielding undecaprenyl-pyrophosphoryl-MurNAc-pentapeptide, known as lipid I. This is Phospho-N-acetylmuramoyl-pentapeptide-transferase from Francisella tularensis subsp. novicida (strain U112).